The following is a 448-amino-acid chain: Signal recognition particle protein (448 aa).

Residues 101–108 (GLQGSGKT), 182–186 (DSAGR), and 240–243 (SKFD) contribute to the GTP site.

Belongs to the GTP-binding SRP family. SRP54 subfamily. As to quaternary structure, part of the signal recognition particle protein translocation system, which is composed of SRP and FtsY. SRP is a ribonucleoprotein composed of Ffh and a 4.5S RNA molecule.

It localises to the cytoplasm. It carries out the reaction GTP + H2O = GDP + phosphate + H(+). Its function is as follows. Involved in targeting and insertion of nascent membrane proteins into the cytoplasmic membrane. Binds to the hydrophobic signal sequence of the ribosome-nascent chain (RNC) as it emerges from the ribosomes. The SRP-RNC complex is then targeted to the cytoplasmic membrane where it interacts with the SRP receptor FtsY. Interaction with FtsY leads to the transfer of the RNC complex to the Sec translocase for insertion into the membrane, the hydrolysis of GTP by both Ffh and FtsY, and the dissociation of the SRP-FtsY complex into the individual components. The sequence is that of Signal recognition particle protein from Helicobacter pylori (strain ATCC 700392 / 26695) (Campylobacter pylori).